A 295-amino-acid polypeptide reads, in one-letter code: Glycine N-methyltransferase (295 aa).

V2 is subject to N-acetylvaline. (6S)-5-methyl-5,6,7,8-tetrahydrofolate is bound by residues S4 and Y6. At S10 the chain carries Phosphoserine. The S-adenosyl-L-methionine site is built by Y22, W31, Y34, and R41. Residue Y34 is modified to Phosphotyrosine. N6-succinyllysine is present on K46. S-adenosyl-L-methionine-binding positions include A65, 86–88 (DAS), 117–118 (NW), 139–142 (LGNS), and R178. 3 positions are modified to N6-succinyllysine: K193, K198, and K203. A (6S)-5-methyl-5,6,7,8-tetrahydrofolate-binding site is contributed by H217. Residue Y223 coordinates S-adenosyl-L-methionine. (6S)-5-methyl-5,6,7,8-tetrahydrofolate is bound at residue R242.

The protein belongs to the class I-like SAM-binding methyltransferase superfamily. Glycine N-methyltransferase family. As to quaternary structure, homotetramer. In terms of tissue distribution, expressed only in liver, pancreas, and prostate.

The protein localises to the cytoplasm. It carries out the reaction glycine + S-adenosyl-L-methionine = sarcosine + S-adenosyl-L-homocysteine + H(+). Its activity is regulated as follows. Inhibited by 5-methyltetrahydrofolate monoglutamate and by 5-methyltetrahydrofolate pentaglutamate, inhibition is much more effective by the pentaglutamate form than by the monoglutamate form. Two molecules of 5-methyltetrahydrofolate are bound per tetramer. The binding sites are localized between subunits. Inhibitor binding may preclude movements of the polypeptide chain that are necessary for enzyme activity. In terms of biological role, catalyzes the methylation of glycine by using S-adenosylmethionine (AdoMet) to form N-methylglycine (sarcosine) with the concomitant production of S-adenosylhomocysteine (AdoHcy), a reaction regulated by the binding of 5-methyltetrahydrofolate. Plays an important role in the regulation of methyl group metabolism by regulating the ratio between S-adenosyl-L-methionine and S-adenosyl-L-homocysteine. The protein is Glycine N-methyltransferase of Homo sapiens (Human).